A 238-amino-acid polypeptide reads, in one-letter code: Large ribosomal subunit protein uL1 (238 aa).

A disordered region spans residues 217–238 (TNGPGVPVDETIQKNYADDAEA).

The protein belongs to the universal ribosomal protein uL1 family. As to quaternary structure, part of the 50S ribosomal subunit.

Binds directly to 23S rRNA. The L1 stalk is quite mobile in the ribosome, and is involved in E site tRNA release. In terms of biological role, protein L1 is also a translational repressor protein, it controls the translation of the L11 operon by binding to its mRNA. In Corynebacterium urealyticum (strain ATCC 43042 / DSM 7109), this protein is Large ribosomal subunit protein uL1.